The chain runs to 289 residues: Agmatinase (289 aa).

His112, Asp135, His137, Asp139, Asp216, and Asp218 together coordinate Mn(2+).

The protein belongs to the arginase family. Agmatinase subfamily. Requires Mn(2+) as cofactor.

It carries out the reaction agmatine + H2O = urea + putrescine. The protein operates within amine and polyamine biosynthesis; putrescine biosynthesis via agmatine pathway; putrescine from agmatine: step 1/1. Catalyzes the formation of putrescine from agmatine. This chain is Agmatinase (speB), found in Halalkalibacterium halodurans (strain ATCC BAA-125 / DSM 18197 / FERM 7344 / JCM 9153 / C-125) (Bacillus halodurans).